The sequence spans 132 residues: Fatty acid-binding protein 9 (132 aa).

Phosphoserine is present on residues Ser-13, Ser-14, Ser-44, and Ser-91.

Belongs to the calycin superfamily. Fatty-acid binding protein (FABP) family.

It localises to the cytoplasm. The protein is Fatty acid-binding protein 9 (FABP9) of Homo sapiens (Human).